Here is a 243-residue protein sequence, read N- to C-terminus: 1-(5-phosphoribosyl)-5-[(5-phosphoribosylamino)methylideneamino] imidazole-4-carboxamide isomerase (243 aa).

Catalysis depends on D8, which acts as the Proton acceptor. The active-site Proton donor is the D129.

This sequence belongs to the HisA/HisF family.

It localises to the cytoplasm. It catalyses the reaction 1-(5-phospho-beta-D-ribosyl)-5-[(5-phospho-beta-D-ribosylamino)methylideneamino]imidazole-4-carboxamide = 5-[(5-phospho-1-deoxy-D-ribulos-1-ylimino)methylamino]-1-(5-phospho-beta-D-ribosyl)imidazole-4-carboxamide. The protein operates within amino-acid biosynthesis; L-histidine biosynthesis; L-histidine from 5-phospho-alpha-D-ribose 1-diphosphate: step 4/9. This chain is 1-(5-phosphoribosyl)-5-[(5-phosphoribosylamino)methylideneamino] imidazole-4-carboxamide isomerase, found in Brucella anthropi (strain ATCC 49188 / DSM 6882 / CCUG 24695 / JCM 21032 / LMG 3331 / NBRC 15819 / NCTC 12168 / Alc 37) (Ochrobactrum anthropi).